Reading from the N-terminus, the 373-residue chain is G protein-coupled receptor 137Ba (373 aa).

Residues 1–15 (MQKDSLPTLSPAVPP) lie on the Lumenal side of the membrane. The helical transmembrane segment at 16–36 (YVMLGLTVAYTIFYCLLFVFV) threads the bilayer. Over 37 to 55 (YVQLWLVLRYRHKRFSYQT) the chain is Cytoplasmic. The helical transmembrane segment at 56–76 (VFLFLCLLWAALRALLFSFYF) threads the bilayer. Topologically, residues 77–84 (KNCVTANT) are lumenal. The chain crosses the membrane as a helical span at residues 85 to 105 (LGPFCFWLLYCFPVCLQFFTL). The Cytoplasmic portion of the chain corresponds to 106 to 135 (SLMNLYFAQVIFKAKSKYSPELQKYRLPLY). Residues 136–156 (LLFLSISLLFLLVNLTCALLV) traverse the membrane as a helical segment. Residues 157–176 (KINRANTETVVLVRVTVNDS) lie on the Lumenal side of the membrane. Residues 177–197 (LFVLCAVSLSLCLYRIAKMSL) form a helical membrane-spanning segment. The Cytoplasmic portion of the chain corresponds to 198 to 213 (ANIYLEAKGTSVCQVT). Residues 214–234 (LIGVTVVLLYSSRACYNLVVL) traverse the membrane as a helical segment. The Lumenal segment spans residues 235–268 (ALTKIKSINSFDYDWYNVSDQADLKSTLGDAGYV). Residues 269 to 289 (VFGVILFVWELLPTSLVVYFF) traverse the membrane as a helical segment. At 290 to 373 (RVRKPTLDRS…HLAPEELNPY (84 aa)) the chain is on the cytoplasmic side.

Belongs to the GPR137 family.

It is found in the lysosome membrane. In terms of biological role, lysosomal integral membrane protein that regulates the localization and activity of mTORC1, a signaling complex promoting cell growth in response to growth factors, energy levels, and amino acids. Interacts with Rag GTPases and increases the lysosomial localization and activity of Rag GTPases and thereby regulates mTORC1 translocation and activity in lysosome. Also acts as a negative regulator of osteoclast activity. May be involved in interleukin-4-induced M2 macrophage polarization. Its function is as follows. Also acts as a negative regulator of osteoclast activity. May be involved in interleukin-4-induced M2 macrophage polarization. This is G protein-coupled receptor 137Ba from Danio rerio (Zebrafish).